A 516-amino-acid chain; its full sequence is Na(+)/H(+) antiporter NhaB (516 aa).

12 helical membrane-spanning segments follow: residues 23–43 (LALI…PFVA), 61–80 (CYPL…IGMT), 97–117 (LLLI…LFVF), 120–140 (LLLG…AAAF), 144–164 (FLDA…FYGI), 202–222 (LMMH…VGEP), 238–258 (FFIR…LTCL), 303–323 (AVIG…VGLI), 348–368 (TEAL…AVII), 391–411 (LFYL…VGTV), 447–467 (ATPN…APLI), and 475–495 (VWMA…CVEF).

It belongs to the NhaB Na(+)/H(+) (TC 2.A.34) antiporter family.

The protein localises to the cell inner membrane. It catalyses the reaction 2 Na(+)(in) + 3 H(+)(out) = 2 Na(+)(out) + 3 H(+)(in). Functionally, na(+)/H(+) antiporter that extrudes sodium in exchange for external protons. The polypeptide is Na(+)/H(+) antiporter NhaB (Klebsiella pneumoniae (strain 342)).